The sequence spans 365 residues: Histidinol-phosphate aminotransferase (365 aa).

Residues 1 to 22 (MSRPVPNPGILDIAPYTPGKSP) are disordered. N6-(pyridoxal phosphate)lysine is present on Lys221.

Belongs to the class-II pyridoxal-phosphate-dependent aminotransferase family. Histidinol-phosphate aminotransferase subfamily. As to quaternary structure, homodimer. Pyridoxal 5'-phosphate is required as a cofactor.

The enzyme catalyses L-histidinol phosphate + 2-oxoglutarate = 3-(imidazol-4-yl)-2-oxopropyl phosphate + L-glutamate. It functions in the pathway amino-acid biosynthesis; L-histidine biosynthesis; L-histidine from 5-phospho-alpha-D-ribose 1-diphosphate: step 7/9. The polypeptide is Histidinol-phosphate aminotransferase (Rhodopseudomonas palustris (strain BisA53)).